We begin with the raw amino-acid sequence, 273 residues long: Vitamin B12-binding protein (273 aa).

The signal sequence occupies residues 1-18 (MMKTLSSLLLLFSVSLQA). The 251-residue stretch at 23-273 (RVISLAPHAT…EHFASIEQKR (251 aa)) folds into the Fe/B12 periplasmic-binding domain. The cysteines at positions 183 and 263 are disulfide-linked.

Belongs to the BtuF family. The complex is composed of two ATP-binding proteins (BtuD), two transmembrane proteins (BtuC) and a solute-binding protein (BtuF).

It localises to the periplasm. Functionally, part of the ABC transporter complex BtuCDF involved in vitamin B12 import. Binds vitamin B12 and delivers it to the periplasmic surface of BtuC. The polypeptide is Vitamin B12-binding protein (Vibrio vulnificus (strain YJ016)).